A 128-amino-acid chain; its full sequence is Gastrotropin (128 aa).

Ala-2 bears the N-acetylalanine mark.

It belongs to the calycin superfamily. Fatty-acid binding protein (FABP) family. Expressed in ovary granulosa and luteal cells.

It localises to the cytoplasm. Its subcellular location is the membrane. Its function is as follows. Binds to bile acids and is involved in enterohepatic bile acid metabolism. Required for efficient apical to basolateral transport of conjugated bile acids in ileal enterocytes. Stimulates gastric acid and pepsinogen secretion. The chain is Gastrotropin (Fabp6) from Mus musculus (Mouse).